A 281-amino-acid polypeptide reads, in one-letter code: Small ribosomal subunit protein uS2 (281 aa).

Residues 225–281 (LMERKAEKPEEEETEEAAPRRERRARSGARRSRQNENEATAEAATEVAEAPEAEEAE) are disordered. The segment covering 245–256 (RERRARSGARRS) has biased composition (basic residues). The span at 262 to 272 (EATAEAATEVA) shows a compositional bias: low complexity.

Belongs to the universal ribosomal protein uS2 family.

The chain is Small ribosomal subunit protein uS2 from Porphyromonas gingivalis (strain ATCC 33277 / DSM 20709 / CIP 103683 / JCM 12257 / NCTC 11834 / 2561).